A 326-amino-acid polypeptide reads, in one-letter code: Phospho-N-acetylmuramoyl-pentapeptide-transferase (326 aa).

10 helical membrane-spanning segments follow: residues 2–22 (ILATKVFFTSFVFGFILFPYF), 51–71 (VPPMGGIIILISSLLPILLWA), 73–93 (LTPEILLLILITLFFALLGFI), 113–133 (ILIQFIVALVGVFILKLYSAE), 143–163 (GVIIDFGYLYVPFAAFVIVGS), 175–195 (GLAATQVITSFAFLGLIAYIT), 199–219 (MNITLFCIAFIGAILSFLWFN), 225–245 (IFMGDVGSLSVGAALGLTSVL), 250–270 (MLFAIIGIIFVIETLSVIIQI), and 305–325 (VIVMKFWIISIICSVFTITFL).

It belongs to the glycosyltransferase 4 family. MraY subfamily. The cofactor is Mg(2+).

It localises to the cell membrane. The catalysed reaction is UDP-N-acetyl-alpha-D-muramoyl-L-alanyl-gamma-D-glutamyl-meso-2,6-diaminopimeloyl-D-alanyl-D-alanine + di-trans,octa-cis-undecaprenyl phosphate = di-trans,octa-cis-undecaprenyl diphospho-N-acetyl-alpha-D-muramoyl-L-alanyl-D-glutamyl-meso-2,6-diaminopimeloyl-D-alanyl-D-alanine + UMP. Its pathway is cell wall biogenesis; peptidoglycan biosynthesis. Functionally, catalyzes the initial step of the lipid cycle reactions in the biosynthesis of the cell wall peptidoglycan: transfers peptidoglycan precursor phospho-MurNAc-pentapeptide from UDP-MurNAc-pentapeptide onto the lipid carrier undecaprenyl phosphate, yielding undecaprenyl-pyrophosphoryl-MurNAc-pentapeptide, known as lipid I. This Wolbachia pipientis wMel protein is Phospho-N-acetylmuramoyl-pentapeptide-transferase.